Here is a 191-residue protein sequence, read N- to C-terminus: Ribosomal RNA small subunit methyltransferase G (191 aa).

S-adenosyl-L-methionine is bound by residues G62, F67, 111 to 112 (IE), and R124.

This sequence belongs to the methyltransferase superfamily. RNA methyltransferase RsmG family.

The protein localises to the cytoplasm. The enzyme catalyses guanosine(527) in 16S rRNA + S-adenosyl-L-methionine = N(7)-methylguanosine(527) in 16S rRNA + S-adenosyl-L-homocysteine. Specifically methylates the N7 position of guanine in position 527 of 16S rRNA. The polypeptide is Ribosomal RNA small subunit methyltransferase G (Rickettsia prowazekii (strain Madrid E)).